The sequence spans 164 residues: uncharacterized protein (164 aa).

This is an uncharacterized protein from Arabidopsis thaliana (Mouse-ear cress).